The following is a 446-amino-acid chain: Immunoglobulin heavy constant gamma 3 (446 aa).

Residues 1 to 98 (ASTKGPSVFP…PSNTKVDKRV (98 aa)) are CH1. At 1-397 (ASTKGPSVFP…DGELDGLWTT (397 aa)) the chain is on the extracellular side. Residues 6–99 (PSVFPLAPCS…SNTKVDKRVE (94 aa)) enclose the Ig-like 1 domain. A disulfide bridge links C27 with C83. The hinge stretch occupies residues 99 to 160 (ELKTPLGDTT…DTPPPCPRCP (62 aa)). 3 consecutive repeats follow at residues 116–130 (EPKS…PRCP), 131–145 (EPKS…PRCP), and 146–160 (EPKS…PRCP). T122, T137, and T152 each carry an O-linked (GalNAc...) threonine glycan. The CH2 stretch occupies residues 161-270 (APELLGGPSV…PIEKTISKTK (110 aa)). 2 consecutive Ig-like domains span residues 168–267 (PSVF…KTIS) and 276–372 (PQVY…KSLS). Disulfide bonds link C191–C251 and C297–C355. N227 and N322 each carry an N-linked (GlcNAc...) asparagine glycan. The CH3 stretch occupies residues 271–376 (GQPREPQVYT…TQKSLSLSPE (106 aa)). Residues 398–418 (ITIFITLFLLSVCYSATVTFF) form a helical membrane-spanning segment. Residues 419 to 446 (KVKWIFSSVVDLKQTIIPDYRNMIGQGA) are Cytoplasmic-facing.

As to quaternary structure, immunoglobulins are composed of two identical heavy chains and two identical light chains; disulfide-linked. In terms of processing, N-linked glycans at Asn-322 are noncore fucosylated and the vast majority are diantennary species with a bisecting GlcNAc. Among them the most dominant glycans are HexNAc5Hex4, HexNAc5Hex5, and HexNAc5Hex5Sia1. N-linked glycans at Asn-227 are diantennary core fucosylated structures without bisecting GlcNAc (HexNAc4Hex4Fuc1, HexNAc4Hex5Fuc1, and HexNAc4Hex5Fuc1Sia1). Glycosylation on Asn-227 is required for interaction with Fc receptors and ability to activate the complement pathway. Post-translationally, (Microbial infection) Deglycosylation on Asn-227 by S.pyogenes EndoS or Endos2 endoglucosidases prevents interaction between immunoglobulin-gamma (IgG) and Fc receptors, impairing ability to activate the complement pathway. In terms of processing, O-linked glycans are non-, mono- and disialylated core 1-type O-glycans.

Its subcellular location is the secreted. The protein localises to the cell membrane. Its function is as follows. Constant region of immunoglobulin heavy chains. Immunoglobulins, also known as antibodies, are membrane-bound or secreted glycoproteins produced by B lymphocytes. In the recognition phase of humoral immunity, the membrane-bound immunoglobulins serve as receptors which, upon binding of a specific antigen, trigger the clonal expansion and differentiation of B lymphocytes into immunoglobulins-secreting plasma cells. Secreted immunoglobulins mediate the effector phase of humoral immunity, which results in the elimination of bound antigens. The antigen binding site is formed by the variable domain of one heavy chain, together with that of its associated light chain. Thus, each immunoglobulin has two antigen binding sites with remarkable affinity for a particular antigen. The variable domains are assembled by a process called V-(D)-J rearrangement and can then be subjected to somatic hypermutations which, after exposure to antigen and selection, allow affinity maturation for a particular antigen. In Homo sapiens (Human), this protein is Immunoglobulin heavy constant gamma 3.